The sequence spans 548 residues: Transcriptional adapter ADA2a (548 aa).

Residues 1–30 (MGRSKLASRPAEEDLNPGKSKRKKISLGPE) are disordered. A ZZ-type zinc finger spans residues 48 to 104 (PGLYCCNYCDKDLSGLVRFKCAVCMDFDLCVECFSVGVELNRHKNSHPYRVMDNLSF). Zn(2+)-binding residues include C53, C56, C68, C71, C77, C80, H90, and H94. An SANT domain is found at 106–158 (LVTSDWNADEEILLLEAIATYGFGNWKEVADHVGSKTTTECIKHFNSAYMQSP). An N6-acetyllysine; by GCN5 modification is found at K257. Residues 365–386 (QSKEEHKELIKKVIEEHQILRR) are a coiled coil. An SWIRM domain is found at 461–548 (PRIYSGLDTW…LVHKGIGDST (88 aa)).

Interacts in vitro with the HAT domain of GCN5 and with the DNA-binding domain of the transcriptional activator DREB1B/CBF1. Post-translationally, acetylated in vitro by GCN5, but acetylation is not essential for biological activity. As to expression, expressed in roots and leaves.

The protein resides in the nucleus. Required for the function of some acidic activation domains, which activate transcription from a distant site. The exact mechanism of action is not yet known. ADA2 stimulates the acetyltransferase activity of GCN5 on free histones or nucleosomes, probably by opening up the promoter region. This chain is Transcriptional adapter ADA2a (ADA2A), found in Arabidopsis thaliana (Mouse-ear cress).